Here is a 211-residue protein sequence, read N- to C-terminus: Beta-crystallin B3 (211 aa).

The residue at position 1 (methionine 1) is an N-acetylmethionine. An N-acetylalanine; in Beta-crystallin B3, N-terminally processed modification is found at alanine 2. Positions 2–23 are N-terminal arm; that stretch reads AEQHGAPEQAAASKSHGGLGGS. Beta/gamma crystallin 'Greek key' domains lie at 24-63 and 64-108; these read YKVT…QVES and GPWL…RPLH. The interval 109–113 is connecting peptide; sequence IDGPD. Beta/gamma crystallin 'Greek key' domains follow at residues 114 to 155 and 156 to 198; these read HKLH…RVIN and GTWV…RRIR. Residues 200 to 211 form a C-terminal arm region; it reads QKWHKRGCFLSS.

It belongs to the beta/gamma-crystallin family. In terms of assembly, homo/heterodimer, or complexes of higher-order. The structure of beta-crystallin oligomers seems to be stabilized through interactions between the N-terminal arms.

Its function is as follows. Crystallins are the dominant structural components of the vertebrate eye lens. The protein is Beta-crystallin B3 (Crybb3) of Rattus norvegicus (Rat).